The following is a 198-amino-acid chain: V-type proton ATPase subunit E (198 aa).

It belongs to the V-ATPase E subunit family.

Its function is as follows. Produces ATP from ADP in the presence of a proton gradient across the membrane. In Borrelia duttonii (strain Ly), this protein is V-type proton ATPase subunit E.